Here is a 434-residue protein sequence, read N- to C-terminus: UDP-N-acetylmuramate--L-alanine ligase (434 aa).

Residue 108–114 (GSHGKTT) coordinates ATP.

The protein belongs to the MurCDEF family.

It localises to the cytoplasm. The catalysed reaction is UDP-N-acetyl-alpha-D-muramate + L-alanine + ATP = UDP-N-acetyl-alpha-D-muramoyl-L-alanine + ADP + phosphate + H(+). Its pathway is cell wall biogenesis; peptidoglycan biosynthesis. Functionally, cell wall formation. The chain is UDP-N-acetylmuramate--L-alanine ligase from Geobacillus kaustophilus (strain HTA426).